We begin with the raw amino-acid sequence, 326 residues long: Beta-ketoacyl-[acyl-carrier-protein] synthase III (326 aa).

Active-site residues include cysteine 111 and histidine 252. The tract at residues 253–257 (QANIR) is ACP-binding. Residue asparagine 282 is part of the active site.

Belongs to the thiolase-like superfamily. FabH family. As to quaternary structure, homodimer.

Its subcellular location is the plastid. It is found in the chloroplast. It carries out the reaction malonyl-[ACP] + acetyl-CoA + H(+) = 3-oxobutanoyl-[ACP] + CO2 + CoA. It functions in the pathway lipid metabolism; fatty acid biosynthesis. Catalyzes the condensation reaction of fatty acid synthesis by the addition to an acyl acceptor of two carbons from malonyl-ACP. Catalyzes the first condensation reaction which initiates fatty acid synthesis and may therefore play a role in governing the total rate of fatty acid production. Possesses both acetoacetyl-ACP synthase and acetyl transacylase activities. Its substrate specificity determines the biosynthesis of branched-chain and/or straight-chain of fatty acids. This chain is Beta-ketoacyl-[acyl-carrier-protein] synthase III, found in Porphyra purpurea (Red seaweed).